We begin with the raw amino-acid sequence, 66 residues long: Ocellatin-PT5 (66 aa).

Residues 1–22 (MAFLKKSLFLVLFLGLVSLSIC) form the signal peptide. A propeptide spanning residues 23–39 (DEEKRQDEDDDDDDDEE) is cleaved from the precursor. Residue V66 is modified to Valine amide.

In terms of tissue distribution, expressed by the skin glands.

The protein localises to the secreted. Has antibacterial activity against Gram-negative bacterium E.coli ATCC 25922 (MIC=300 uM) but not against S.pneumoniae ATCC 700603, S.choleraesuis ATCC 14028 or Gram-positive bacterium S.aureus ATCC 29313. Shows very little hemolytic activity and no cytotoxicity. The sequence is that of Ocellatin-PT5 from Leptodactylus pustulatus (Ceara white-lipped frog).